Here is a 565-residue protein sequence, read N- to C-terminus: Periplasmic trehalase (565 aa).

An N-terminal signal peptide occupies residues Met1–Ala30. Substrate-binding positions include Arg152, Trp159–Asp160, Asn196, Arg205–Gln207, Arg277–Glu279, and Gly310. Residues Asp312 and Glu496 each act as proton donor/acceptor in the active site. Residue Glu511 coordinates substrate. Positions Cys539 to Pro565 are disordered.

Belongs to the glycosyl hydrolase 37 family. In terms of assembly, monomer.

Its subcellular location is the periplasm. It carries out the reaction alpha,alpha-trehalose + H2O = alpha-D-glucose + beta-D-glucose. Functionally, provides the cells with the ability to utilize trehalose at high osmolarity by splitting it into glucose molecules that can subsequently be taken up by the phosphotransferase-mediated uptake system. In Escherichia coli (strain SMS-3-5 / SECEC), this protein is Periplasmic trehalase.